We begin with the raw amino-acid sequence, 495 residues long: Leucine aminopeptidase 2 (495 aa).

The N-terminal stretch at 1-21 (MKSQLLSLAVAVSTISQGVVG) is a signal peptide. A PA domain is found at 124-218 (PPANKIMAEL…EDGKNLASLV (95 aa)). Residues Asn-142 and Asn-235 are each glycosylated (N-linked (GlcNAc...) asparagine). The Zn(2+) site is built by His-259 and Asp-271. N-linked (GlcNAc...) asparagine glycosylation is present at Asn-272. The active-site Proton acceptor is Glu-303. Zn(2+) is bound by residues Glu-304 and Asp-332. N-linked (GlcNAc...) asparagine glycosylation is present at Asn-352. His-430 is a binding site for Zn(2+).

This sequence belongs to the peptidase M28 family. M28A subfamily. Monomer. Zn(2+) is required as a cofactor.

The protein localises to the secreted. Functionally, extracellular aminopeptidase that releases a wide variety of amino acids from natural peptides and contributes to pathogenicity. The chain is Leucine aminopeptidase 2 (LAP2) from Trichophyton equinum (Horse ringworm fungus).